The following is a 517-amino-acid chain: Nicotine N-demethylase CYP82E4 (517 aa).

A helical transmembrane segment spans residues 2 to 22 (LSPIEAIVGLVTFTFLFYFLW). Lysine 254 is covalently cross-linked (Glycyl lysine isopeptide (Lys-Gly) (interchain with G-Cter in ubiquitin)). Residue cysteine 457 participates in heme binding.

Belongs to the cytochrome P450 family. CYP82E2 subfamily. It depends on heme as a cofactor. Expressed in leaves.

Its subcellular location is the membrane. It catalyses the reaction (S)-nicotine + reduced [NADPH--hemoprotein reductase] + O2 = (S)-nornicotine + formaldehyde + oxidized [NADPH--hemoprotein reductase] + H2O + H(+). It participates in alkaloid biosynthesis; nicotine biosynthesis. Involved in the biosynthesis of pyridine alkaloid natural products, leading mainly to the production of anabasine, anatabine, nicotine and nornicotine, effective deterrents against herbivores with antiparasitic and pesticide properties (neurotoxins); nornicotine serves as the precursor in the synthesis of the carcinogen compound N'-nitrosonornicotine (NNN). Catalyzes the demethylation of nicotine to form nornicotine. In Nicotiana tomentosiformis (Tobacco), this protein is Nicotine N-demethylase CYP82E4.